Consider the following 263-residue polypeptide: Virulence plasmid protein pGP6-D-related protein (263 aa).

The protein belongs to the UPF0137 (pGP6-D) family.

The polypeptide is Virulence plasmid protein pGP6-D-related protein (Chlamydia trachomatis serovar D (strain ATCC VR-885 / DSM 19411 / UW-3/Cx)).